The sequence spans 484 residues: Nuclear rim protein 1 (484 aa).

A Phosphoserine modification is found at Ser-3. The next 2 helical transmembrane spans lie at 145–165 (FTIF…MFGY) and 237–257 (IPTN…IVFL). The segment at 416-457 (SSNENLEKGGAFLPNQDQNRPSKSLSPLRKTPLSARQKRFEG) is disordered. Ser-417 bears the Phosphoserine mark. A compositionally biased stretch (polar residues) spans 430 to 440 (NQDQNRPSKSL). At Ser-474 the chain carries Phosphoserine.

It belongs to the NUR1 family. In terms of assembly, interacts with CSM1.

The protein localises to the nucleus membrane. Its function is as follows. Member of a perinuclear network that controls recombination at multiple loci to maintain genome stability. Required for rDNA repeat stability. This is Nuclear rim protein 1 (NUR1) from Saccharomyces cerevisiae (strain JAY291) (Baker's yeast).